A 388-amino-acid polypeptide reads, in one-letter code: S-adenosylmethionine synthase (388 aa).

Histidine 16 serves as a coordination point for ATP. Residue aspartate 18 coordinates Mg(2+). Glutamate 44 lines the K(+) pocket. Positions 57 and 100 each coordinate L-methionine. Residues 100–110 (QSPEIAQGVDR) are flexible loop. ATP-binding positions include 165 to 167 (DAK), aspartate 240, 246 to 247 (RK), alanine 263, and lysine 267. Residue aspartate 240 participates in L-methionine binding. An L-methionine-binding site is contributed by lysine 271.

Belongs to the AdoMet synthase family. As to quaternary structure, homotetramer; dimer of dimers. It depends on Mg(2+) as a cofactor. Requires K(+) as cofactor.

It localises to the cytoplasm. The catalysed reaction is L-methionine + ATP + H2O = S-adenosyl-L-methionine + phosphate + diphosphate. It functions in the pathway amino-acid biosynthesis; S-adenosyl-L-methionine biosynthesis; S-adenosyl-L-methionine from L-methionine: step 1/1. Its function is as follows. Catalyzes the formation of S-adenosylmethionine (AdoMet) from methionine and ATP. The overall synthetic reaction is composed of two sequential steps, AdoMet formation and the subsequent tripolyphosphate hydrolysis which occurs prior to release of AdoMet from the enzyme. The protein is S-adenosylmethionine synthase of Acinetobacter baumannii (strain AYE).